We begin with the raw amino-acid sequence, 431 residues long: Galanin-like G-protein coupled receptor npr-9 (431 aa).

The Extracellular portion of the chain corresponds to 1-34 (MEFENLTKEEMEQLQKIYDDTISFERKIGIIIPT). N-linked (GlcNAc...) asparagine glycosylation is present at N5. The helical transmembrane segment at 35-55 (IFAVIILVGLVGNALVVIVAF) threads the bilayer. Over 56-66 (GRQMRNSTNTL) the chain is Cytoplasmic. The chain crosses the membrane as a helical span at residues 67 to 87 (IIGLAISDLMFLLLCVPFTAV). The Extracellular segment spans residues 88-101 (DYAAPTWIFPEWTC). The cysteines at positions 101 and 182 are disulfide-linked. Residues 102-124 (SMINFFQHTSAYCSVWTLTLMAL) traverse the membrane as a helical segment. The Cytoplasmic segment spans residues 125–143 (DRYLAVVYPVESMTLRTPR). The chain crosses the membrane as a helical span at residues 144 to 164 (NTVIALCFIYIIIIASQIPVG). Over 165–203 (RMHGIYVYDFIMEKRSTCAILTIATAEATPTMARTYFMT) the chain is Extracellular. Residues 204–224 (FNVFGYVLPLGISVVLYGLML) traverse the membrane as a helical segment. At 225-268 (RKLWDMPRPGNSQSVGGRNLTNRDSGSSIRRRPEATAAKRKVTR) the chain is on the cytoplasmic side. The span at 235-252 (NSQSVGGRNLTNRDSGSS) shows a compositional bias: polar residues. The segment at 235 to 257 (NSQSVGGRNLTNRDSGSSIRRRP) is disordered. Residues 269-289 (LVLCVLITWALCWLPLNVCFF) traverse the membrane as a helical segment. Residues 290-298 (MSGLAYPEP) are Extracellular-facing. Residues 299–319 (LVISHGVIMVIVQIASQVLAY) traverse the membrane as a helical segment. The Cytoplasmic segment spans residues 320-431 (TNSCLNPILY…RSKSTRSYNL (112 aa)). Over residues 393–414 (SLLKDNSSSATSVQPLRTSIQA) the composition is skewed to polar residues. The segment at 393 to 431 (SLLKDNSSSATSVQPLRTSIQAKKTKNIGRSKSTRSYNL) is disordered. A compositionally biased stretch (basic residues) spans 415–425 (KKTKNIGRSKS).

Belongs to the G-protein coupled receptor 1 family. Exclusively expressed in the AIB interneuron.

The protein localises to the cell membrane. Its function is as follows. Neuropeptide that controls movement such as roaming, foraging and backwards locomotion or 'reversals' in response to environmental cues such as food availability or volatile odorants such as octanol. Antagonizes AIB interneuron activity to control bacterial colonization and may negatively regulate the expression of immunity-related genes such as pqm-1 and dod-22 in response to infection by P.aeruginosa. This is Galanin-like G-protein coupled receptor npr-9 from Caenorhabditis elegans.